The following is a 260-amino-acid chain: Triosephosphate isomerase (260 aa).

11–13 (NWK) contacts substrate. His103 serves as the catalytic Electrophile. Catalysis depends on Glu175, which acts as the Proton acceptor. Residues Gly181, Ser220, and 241 to 242 (GG) each bind substrate.

It belongs to the triosephosphate isomerase family. As to quaternary structure, homodimer.

It localises to the cytoplasm. It carries out the reaction D-glyceraldehyde 3-phosphate = dihydroxyacetone phosphate. It participates in carbohydrate biosynthesis; gluconeogenesis. Its pathway is carbohydrate degradation; glycolysis; D-glyceraldehyde 3-phosphate from glycerone phosphate: step 1/1. Involved in the gluconeogenesis. Catalyzes stereospecifically the conversion of dihydroxyacetone phosphate (DHAP) to D-glyceraldehyde-3-phosphate (G3P). This is Triosephosphate isomerase from Shewanella sp. (strain MR-4).